The primary structure comprises 75 residues: Serine rich endogenous peptide 20 (75 aa).

A signal peptide spans 1–25 (MYKLTLCILTLSFLLLSGLSNTVLA). The short motif at 52-66 (KIGASGSNSGRAPSC) is the SCOOP motif element. Residues 54-75 (GASGSNSGRAPSCNNSCKPNRP) form a disordered region. A SxS motif essential for MIK2 binding motif is present at residues 56–58 (SGS). Over residues 56–75 (SGSNSGRAPSCNNSCKPNRP) the composition is skewed to polar residues.

It belongs to the serine rich endogenous peptide (SCOOP) phytocytokine family. In terms of assembly, interacts with MIK2 (via extracellular leucine-rich repeat domain); this interaction triggers the formation of complex between MIK2 and the BAK1/SERK3 and SERK4 coreceptors, and subsequent BAK1 activation by phosphorylation. In terms of tissue distribution, mostly expressed in roots.

Its subcellular location is the cell membrane. The protein localises to the secreted. The protein resides in the extracellular space. It is found in the apoplast. Its function is as follows. Brassicaceae-specific phytocytokine (plant endogenous peptide released into the apoplast) perceived by MIK2 in a BAK1/SERK3 and SERK4 coreceptors-dependent manner, that modulates various physiological and antimicrobial processes including growth prevention and reactive oxygen species (ROS) response regulation. Inhibits root growth. This is Serine rich endogenous peptide 20 from Arabidopsis thaliana (Mouse-ear cress).